Consider the following 229-residue polypeptide: MSTWANLGLQDSASPLMEQLIFFHDHALLILVMITVLVGYLMFMLFFNSYVNRFLLHGQLIEMIWTILPAIILLFIAMPSLRLLYLLDEINEPSITLKSIGHQWYWSYEYSDFNNIEFDSYMIPTNELSNDGFRLLDVDNRIVLPMNSQIRILVTAADVIHSWTVPALGVKVDGTPGRLNQTNFFINRPGLFYGQCSEICGANHSFMPIVIESVPVNYFIKWISNSVNS.

At 1 to 26 the chain is on the mitochondrial intermembrane side; it reads MSTWANLGLQDSASPLMEQLIFFHDH. Residues 27 to 48 traverse the membrane as a helical segment; sequence ALLILVMITVLVGYLMFMLFFN. At 49–62 the chain is on the mitochondrial matrix side; sequence SYVNRFLLHGQLIE. Residues 63 to 82 form a helical membrane-spanning segment; it reads MIWTILPAIILLFIAMPSLR. At 83–229 the chain is on the mitochondrial intermembrane side; the sequence is LLYLLDEINE…IKWISNSVNS (147 aa). Residues H161, C196, E198, C200, H204, and M207 each contribute to the Cu cation site. Mg(2+) is bound at residue E198.

This sequence belongs to the cytochrome c oxidase subunit 2 family. As to quaternary structure, component of the cytochrome c oxidase (complex IV, CIV), a multisubunit enzyme composed of a catalytic core of 3 subunits and several supernumerary subunits. The complex exists as a monomer or a dimer and forms supercomplexes (SCs) in the inner mitochondrial membrane with ubiquinol-cytochrome c oxidoreductase (cytochrome b-c1 complex, complex III, CIII). The cofactor is Cu cation.

It is found in the mitochondrion inner membrane. The catalysed reaction is 4 Fe(II)-[cytochrome c] + O2 + 8 H(+)(in) = 4 Fe(III)-[cytochrome c] + 2 H2O + 4 H(+)(out). In terms of biological role, component of the cytochrome c oxidase, the last enzyme in the mitochondrial electron transport chain which drives oxidative phosphorylation. The respiratory chain contains 3 multisubunit complexes succinate dehydrogenase (complex II, CII), ubiquinol-cytochrome c oxidoreductase (cytochrome b-c1 complex, complex III, CIII) and cytochrome c oxidase (complex IV, CIV), that cooperate to transfer electrons derived from NADH and succinate to molecular oxygen, creating an electrochemical gradient over the inner membrane that drives transmembrane transport and the ATP synthase. Cytochrome c oxidase is the component of the respiratory chain that catalyzes the reduction of oxygen to water. Electrons originating from reduced cytochrome c in the intermembrane space (IMS) are transferred via the dinuclear copper A center (CU(A)) of subunit 2 and heme A of subunit 1 to the active site in subunit 1, a binuclear center (BNC) formed by heme A3 and copper B (CU(B)). The BNC reduces molecular oxygen to 2 water molecules using 4 electrons from cytochrome c in the IMS and 4 protons from the mitochondrial matrix. The polypeptide is Cytochrome c oxidase subunit 2 (mt:CoII) (Drosophila ambigua (Fruit fly)).